Here is a 171-residue protein sequence, read N- to C-terminus: Adenine phosphoribosyltransferase (171 aa).

This sequence belongs to the purine/pyrimidine phosphoribosyltransferase family. In terms of assembly, homodimer.

It localises to the cytoplasm. The catalysed reaction is AMP + diphosphate = 5-phospho-alpha-D-ribose 1-diphosphate + adenine. It participates in purine metabolism; AMP biosynthesis via salvage pathway; AMP from adenine: step 1/1. Catalyzes a salvage reaction resulting in the formation of AMP, that is energically less costly than de novo synthesis. This Geotalea uraniireducens (strain Rf4) (Geobacter uraniireducens) protein is Adenine phosphoribosyltransferase.